The sequence spans 180 residues: ATP-dependent protease subunit HslV (180 aa).

T8 is a catalytic residue. The Na(+) site is built by S165, C168, and T171.

This sequence belongs to the peptidase T1B family. HslV subfamily. In terms of assembly, a double ring-shaped homohexamer of HslV is capped on each side by a ring-shaped HslU homohexamer. The assembly of the HslU/HslV complex is dependent on binding of ATP.

It localises to the cytoplasm. The enzyme catalyses ATP-dependent cleavage of peptide bonds with broad specificity.. Allosterically activated by HslU binding. Protease subunit of a proteasome-like degradation complex believed to be a general protein degrading machinery. The sequence is that of ATP-dependent protease subunit HslV from Staphylococcus saprophyticus subsp. saprophyticus (strain ATCC 15305 / DSM 20229 / NCIMB 8711 / NCTC 7292 / S-41).